A 223-amino-acid chain; its full sequence is Urease accessory protein UreF (223 aa).

Belongs to the UreF family. UreD, UreF and UreG form a complex that acts as a GTP-hydrolysis-dependent molecular chaperone, activating the urease apoprotein by helping to assemble the nickel containing metallocenter of UreC. The UreE protein probably delivers the nickel.

The protein localises to the cytoplasm. Required for maturation of urease via the functional incorporation of the urease nickel metallocenter. The polypeptide is Urease accessory protein UreF (Rhizobium leguminosarum bv. viciae).